The chain runs to 777 residues: Homoaconitase, mitochondrial (777 aa).

The transit peptide at 1 to 35 (MFKRTGSLLLRCRASRVPVIGRPLISLSTSSTSLS) directs the protein to the mitochondrion. The tract at residues 47-74 (LRRYTEASSSTTQTSPSSSSWPAPDAAP) is disordered. Residues 52–74 (EASSSTTQTSPSSSSWPAPDAAP) are compositionally biased toward low complexity. Cysteine 398, cysteine 466, and cysteine 469 together coordinate [4Fe-4S] cluster.

Belongs to the aconitase/IPM isomerase family. It depends on [4Fe-4S] cluster as a cofactor.

The protein localises to the mitochondrion. It carries out the reaction (2R,3S)-homoisocitrate = cis-homoaconitate + H2O. Its pathway is amino-acid biosynthesis; L-lysine biosynthesis via AAA pathway; L-alpha-aminoadipate from 2-oxoglutarate: step 3/5. In terms of biological role, catalyzes the reversible hydration of cis-homoaconitate to (2R,3S)-homoisocitrate, a step in the alpha-aminoadipate pathway for lysine biosynthesis. The polypeptide is Homoaconitase, mitochondrial (lys4) (Aspergillus fumigatus (strain ATCC MYA-4609 / CBS 101355 / FGSC A1100 / Af293) (Neosartorya fumigata)).